The primary structure comprises 317 residues: Acetyl-coenzyme A carboxylase carboxyl transferase subunit alpha (317 aa).

In terms of domain architecture, CoA carboxyltransferase C-terminal spans 40-293 (LEGRVRDAMV…EAVIGDALKE (254 aa)).

It belongs to the AccA family. As to quaternary structure, acetyl-CoA carboxylase is a heterohexamer composed of biotin carboxyl carrier protein (AccB), biotin carboxylase (AccC) and two subunits each of ACCase subunit alpha (AccA) and ACCase subunit beta (AccD).

It localises to the cytoplasm. It carries out the reaction N(6)-carboxybiotinyl-L-lysyl-[protein] + acetyl-CoA = N(6)-biotinyl-L-lysyl-[protein] + malonyl-CoA. It participates in lipid metabolism; malonyl-CoA biosynthesis; malonyl-CoA from acetyl-CoA: step 1/1. In terms of biological role, component of the acetyl coenzyme A carboxylase (ACC) complex. First, biotin carboxylase catalyzes the carboxylation of biotin on its carrier protein (BCCP) and then the CO(2) group is transferred by the carboxyltransferase to acetyl-CoA to form malonyl-CoA. The polypeptide is Acetyl-coenzyme A carboxylase carboxyl transferase subunit alpha (Sinorhizobium medicae (strain WSM419) (Ensifer medicae)).